The following is a 389-amino-acid chain: Chorismate synthase (389 aa).

The NADP(+) site is built by R41 and R47. Residues 129–131 (RSS), 247–248 (NA), G291, 306–310 (KPIST), and R332 contribute to the FMN site.

Belongs to the chorismate synthase family. In terms of assembly, homotetramer. Requires FMNH2 as cofactor.

The enzyme catalyses 5-O-(1-carboxyvinyl)-3-phosphoshikimate = chorismate + phosphate. It functions in the pathway metabolic intermediate biosynthesis; chorismate biosynthesis; chorismate from D-erythrose 4-phosphate and phosphoenolpyruvate: step 7/7. Catalyzes the anti-1,4-elimination of the C-3 phosphate and the C-6 proR hydrogen from 5-enolpyruvylshikimate-3-phosphate (EPSP) to yield chorismate, which is the branch point compound that serves as the starting substrate for the three terminal pathways of aromatic amino acid biosynthesis. This reaction introduces a second double bond into the aromatic ring system. The polypeptide is Chorismate synthase (Rubrobacter xylanophilus (strain DSM 9941 / JCM 11954 / NBRC 16129 / PRD-1)).